Consider the following 332-residue polypeptide: mRNA-decapping enzyme 1 (332 aa).

Residues 141-173 show a composition bias toward low complexity; the sequence is ARAAKAASEAPQASVPAPTQAPAAPAQAPQMAP. The tract at residues 141–175 is disordered; sequence ARAAKAASEAPQASVPAPTQAPAAPAQAPQMAPQA.

The protein belongs to the DCP1 family. In terms of assembly, may be a component of the decapping complex composed of dcap-1 and dcap-2. In terms of tissue distribution, expressed in neurons including touch receptor neurons and motor neurons.

It is found in the cytoplasm. Its subcellular location is the cytoplasmic granule. Its function is as follows. Component of the decapping complex necessary for the degradation of mRNAs, both in normal mRNA turnover and in nonsense-mediated mRNA decay. In contrast to orthologs, does not possess decapping activity and does not remove the 7-methyl guanine cap structure from mRNA molecules. In the nervous system, negatively regulates the expression of insulin-like peptide ins-7, which in turn promotes longevity. This may in part be through promoting the activity of daf-16 in distal tissues. Required for the developmental axon guidance and regrowth of PLM touch receptor neurons. In ADL sensory neurons, plays a role in ciliary shape formation. Acts in neurons to promote larval survival at high temperatures by negatively regulating lin-14 expression. The sequence is that of mRNA-decapping enzyme 1 from Caenorhabditis elegans.